An 83-amino-acid polypeptide reads, in one-letter code: MSGNTGERPFADIITSIRYWVIHSITIPSLFIAGWLFVSTGLAYDVFGSPRPNEYFTENRQEVPLITGRFNSLEQIDEFTKSF.

A helical membrane pass occupies residues 21-35 (VIHSITIPSLFIAGW). H23 contacts heme.

This sequence belongs to the PsbE/PsbF family. As to quaternary structure, heterodimer of an alpha subunit and a beta subunit. PSII is composed of 1 copy each of membrane proteins PsbA, PsbB, PsbC, PsbD, PsbE, PsbF, PsbH, PsbI, PsbJ, PsbK, PsbL, PsbM, PsbT, PsbX, PsbY, PsbZ, Psb30/Ycf12, at least 3 peripheral proteins of the oxygen-evolving complex and a large number of cofactors. It forms dimeric complexes. Heme b is required as a cofactor.

Its subcellular location is the plastid. It is found in the chloroplast thylakoid membrane. Functionally, this b-type cytochrome is tightly associated with the reaction center of photosystem II (PSII). PSII is a light-driven water:plastoquinone oxidoreductase that uses light energy to abstract electrons from H(2)O, generating O(2) and a proton gradient subsequently used for ATP formation. It consists of a core antenna complex that captures photons, and an electron transfer chain that converts photonic excitation into a charge separation. In Marchantia polymorpha (Common liverwort), this protein is Cytochrome b559 subunit alpha.